We begin with the raw amino-acid sequence, 523 residues long: Cytochrome P450 CYP82J17 (523 aa).

A helical membrane pass occupies residues 4 to 24; that stretch reads FLSQPITIVLAILSVLLYNIW. Cysteine 462 lines the heme pocket.

The protein belongs to the cytochrome P450 family. As to expression, mainly expressed in leaves and seed pods and, to a lower extent, in flowers and stems.

It localises to the membrane. Its pathway is steroid metabolism; cholesterol metabolism. Functionally, involved in the biosynthesis of spiroketal steroid and saponin natural products from cholesterol such as diosgenin and analogs (e.g. furostanol and spirostanol), plant defense compounds used as main precursors for the industrial production of steroid hormones. During the 5,6-spiroketalization of cholesterol, may catalyze the 27-monohydroxylation of furostanol-type steroid to an intermediate product that undergoes a stereospecific formation of the terminal heterocycle to yield diosgenin. The protein is Cytochrome P450 CYP82J17 of Trigonella foenum-graecum (Fenugreek).